An 836-amino-acid polypeptide reads, in one-letter code: Homeobox-leucine zipper protein ATHB-15 (836 aa).

Residues 14–77 (DNGKYVRYTP…NRRCREKQRK (64 aa)) constitute a DNA-binding region (homeobox). Residues 72–115 (REKQRKEASRLQAVNRKLTAMNKLLMEENDRLQKQVSQLVHENS) adopt a coiled-coil conformation. Positions 151–379 (RDASPAGLLS…IAQEVTQTNS (229 aa)) constitute an START domain.

The protein belongs to the HD-ZIP homeobox family. Class III subfamily. Interacts with ESR1 and ESR2. Interacts with ZPR3. In terms of tissue distribution, highly expressed the developing vascular elements and the adaxial portion of cotyledons. Expressed in developing ovules, stamens and carpels. Expressed in procambium and shoot meristem.

It is found in the nucleus. Probable transcription factor involved in the regulation of meristem development to promote lateral organ formation. May regulates procambial and vascular tissue formation or maintenance, and vascular development in inflorescence stems. This chain is Homeobox-leucine zipper protein ATHB-15 (ATHB-15), found in Arabidopsis thaliana (Mouse-ear cress).